Reading from the N-terminus, the 428-residue chain is Cell division protein DamX (428 aa).

The disordered stretch occupies residues 1–99; sequence MDEFKPEDEL…KRKKAASKPA (99 aa). Residues 1–103 lie on the Cytoplasmic side of the membrane; it reads MDEFKPEDEL…AASKPASRQY (103 aa). Composition is skewed to basic and acidic residues over residues 7-36 and 50-64; these read EDELKPDPSDRRTGRSRQSSERSERTERGE and DDRRPTRAQKERNEE. Residues 55 to 87 are a coiled coil; it reads TRAQKERNEEPEIEEEIDESEDETVDEERVERR. Residues 65 to 82 show a composition bias toward acidic residues; sequence PEIEEEIDESEDETVDEE. Over residues 86-95 the composition is skewed to basic residues; it reads RRPRKRKKAA. The chain crosses the membrane as a helical span at residues 104-124; it reads MMMGVGILVLLLLIIGIGSAL. Residues 125–428 lie on the Periplasmic side of the membrane; the sequence is KAPSTTSSDQ…PLRQVQADLK (304 aa). 2 disordered regions span residues 149 to 190 and 226 to 344; these read TDQA…VATD and EPAT…KSAP. The segment covering 236-257 has biased composition (polar residues); sequence GNASRDTAKTQTAERPSTTRPA. The span at 288-334 shows a compositional bias: low complexity; it reads PAAPVASTKAPAATSTPAPKETATTAPVQTASPAQTTATPAAGAKTA. Positions 342–419 constitute an SPOR domain; the sequence is SAPSSHYTLQ…VQAKNPWAKP (78 aa).

This sequence belongs to the DamX family. Interacts in vitro with multiple Fts proteins, including FtsQ and FtsN.

It localises to the cell inner membrane. Its function is as follows. Non-essential cell division protein. This chain is Cell division protein DamX, found in Escherichia coli (strain K12).